Reading from the N-terminus, the 189-residue chain is Inosine triphosphate pyrophosphatase (189 aa).

14–19 (TGNQNK) provides a ligand contact to ITP. Glutamate 42 lines the Mg(2+) pocket. ITP contacts are provided by residues lysine 54, 70 to 71 (DT), lysine 87, 146 to 149 (FGWD), lysine 167, and 172 to 173 (HR).

The protein belongs to the HAM1 NTPase family. Homodimer. Requires Mg(2+) as cofactor. It depends on Mn(2+) as a cofactor.

The protein resides in the cytoplasm. Its subcellular location is the nucleus. The enzyme catalyses ITP + H2O = IMP + diphosphate + H(+). It carries out the reaction dITP + H2O = dIMP + diphosphate + H(+). It catalyses the reaction XTP + H2O = XMP + diphosphate + H(+). Functionally, pyrophosphatase that hydrolyzes non-canonical purine nucleotides such as inosine triphosphate (ITP), deoxyinosine triphosphate (dITP) or xanthosine 5'-triphosphate (XTP) to their respective monophosphate derivatives. The enzyme does not distinguish between the deoxy- and ribose forms. Probably excludes non-canonical purines from RNA and DNA precursor pools, thus preventing their incorporation into RNA and DNA and avoiding chromosomal lesions. The protein is Inosine triphosphate pyrophosphatase of Pyricularia oryzae (strain 70-15 / ATCC MYA-4617 / FGSC 8958) (Rice blast fungus).